The chain runs to 250 residues: uncharacterized protein (250 aa).

An N-terminal signal peptide occupies residues 1-25 (MKTLRTLCVLMILSGVIFFGLKIDA).

This is an uncharacterized protein from Bacillus subtilis (strain 168).